A 298-amino-acid chain; its full sequence is Aspartate carbamoyltransferase catalytic subunit (298 aa).

Arginine 50 and threonine 51 together coordinate carbamoyl phosphate. Residue lysine 79 coordinates L-aspartate. The carbamoyl phosphate site is built by arginine 100, histidine 128, and glutamine 131. The L-aspartate site is built by arginine 160 and arginine 221. Carbamoyl phosphate is bound by residues leucine 260 and proline 261.

The protein belongs to the aspartate/ornithine carbamoyltransferase superfamily. ATCase family. In terms of assembly, heterooligomer of catalytic and regulatory chains.

The catalysed reaction is carbamoyl phosphate + L-aspartate = N-carbamoyl-L-aspartate + phosphate + H(+). Its pathway is pyrimidine metabolism; UMP biosynthesis via de novo pathway; (S)-dihydroorotate from bicarbonate: step 2/3. Its function is as follows. Catalyzes the condensation of carbamoyl phosphate and aspartate to form carbamoyl aspartate and inorganic phosphate, the committed step in the de novo pyrimidine nucleotide biosynthesis pathway. In Methanosphaerula palustris (strain ATCC BAA-1556 / DSM 19958 / E1-9c), this protein is Aspartate carbamoyltransferase catalytic subunit.